We begin with the raw amino-acid sequence, 300 residues long: Diaminopimelate epimerase (300 aa).

Substrate contacts are provided by asparagine 15, glutamine 47, and asparagine 67. The active-site Proton donor is the cysteine 76. Residues 77–78 (GN), asparagine 163, asparagine 197, and 215–216 (ER) contribute to the substrate site. The active-site Proton acceptor is the cysteine 224. Position 225–226 (225–226 (GS)) interacts with substrate. The interval 275-300 (SGTFDPATGEWSRDAQNDKPTDRGAA) is disordered. Basic and acidic residues predominate over residues 285-300 (WSRDAQNDKPTDRGAA).

This sequence belongs to the diaminopimelate epimerase family. As to quaternary structure, homodimer.

Its subcellular location is the cytoplasm. It carries out the reaction (2S,6S)-2,6-diaminopimelate = meso-2,6-diaminopimelate. It functions in the pathway amino-acid biosynthesis; L-lysine biosynthesis via DAP pathway; DL-2,6-diaminopimelate from LL-2,6-diaminopimelate: step 1/1. Functionally, catalyzes the stereoinversion of LL-2,6-diaminopimelate (L,L-DAP) to meso-diaminopimelate (meso-DAP), a precursor of L-lysine and an essential component of the bacterial peptidoglycan. The sequence is that of Diaminopimelate epimerase from Brucella anthropi (strain ATCC 49188 / DSM 6882 / CCUG 24695 / JCM 21032 / LMG 3331 / NBRC 15819 / NCTC 12168 / Alc 37) (Ochrobactrum anthropi).